The primary structure comprises 191 residues: Peptidyl-tRNA hydrolase (191 aa).

TRNA is bound at residue Tyr-14. The active-site Proton acceptor is His-19. Residues Tyr-64, Asn-66, and Asn-112 each coordinate tRNA.

The protein belongs to the PTH family. As to quaternary structure, monomer.

Its subcellular location is the cytoplasm. It carries out the reaction an N-acyl-L-alpha-aminoacyl-tRNA + H2O = an N-acyl-L-amino acid + a tRNA + H(+). Its function is as follows. Hydrolyzes ribosome-free peptidyl-tRNAs (with 1 or more amino acids incorporated), which drop off the ribosome during protein synthesis, or as a result of ribosome stalling. Functionally, catalyzes the release of premature peptidyl moieties from peptidyl-tRNA molecules trapped in stalled 50S ribosomal subunits, and thus maintains levels of free tRNAs and 50S ribosomes. In Lachnoclostridium phytofermentans (strain ATCC 700394 / DSM 18823 / ISDg) (Clostridium phytofermentans), this protein is Peptidyl-tRNA hydrolase.